The primary structure comprises 399 residues: uncharacterized protein (399 aa).

The disordered stretch occupies residues 375-399 (AAGGHRGSHGKSEQAATVRVVDDRR).

The protein belongs to the mycobacterial PPE family.

This is an uncharacterized protein from Mycobacterium tuberculosis (strain ATCC 25618 / H37Rv).